We begin with the raw amino-acid sequence, 149 residues long: Deoxyuridine 5'-triphosphate nucleotidohydrolase (149 aa).

Residues 68–70, Asn81, 85–87, and Met95 contribute to the substrate site; these read RSG and LID.

Belongs to the dUTPase family. Mg(2+) serves as cofactor.

It catalyses the reaction dUTP + H2O = dUMP + diphosphate + H(+). It participates in pyrimidine metabolism; dUMP biosynthesis; dUMP from dCTP (dUTP route): step 2/2. Functionally, this enzyme is involved in nucleotide metabolism: it produces dUMP, the immediate precursor of thymidine nucleotides and it decreases the intracellular concentration of dUTP so that uracil cannot be incorporated into DNA. The sequence is that of Deoxyuridine 5'-triphosphate nucleotidohydrolase from Polynucleobacter necessarius subsp. necessarius (strain STIR1).